A 130-amino-acid polypeptide reads, in one-letter code: Small ribosomal subunit protein uS9 (130 aa).

This sequence belongs to the universal ribosomal protein uS9 family.

The sequence is that of Small ribosomal subunit protein uS9 from Mycoplasmoides gallisepticum (strain R(low / passage 15 / clone 2)) (Mycoplasma gallisepticum).